Consider the following 62-residue polypeptide: Bacteriocin piscicolin-126 (62 aa).

Positions M1–G18 are excised as a propeptide. C27 and C32 form a disulfide bridge.

The protein localises to the secreted. In terms of biological role, inhibits the growth of several Gram-positive bacteria, especially the food-borne pathogen L.monocytogenes, but has no effect on the growth of a number of yeasts and Gram-negative bacteria. This is Bacteriocin piscicolin-126 (pisA) from Carnobacterium maltaromaticum (Carnobacterium piscicola).